A 259-amino-acid polypeptide reads, in one-letter code: Thiazole synthase (259 aa).

The active-site Schiff-base intermediate with DXP is the Lys-99. Residues Gly-160, 186–187, and 208–209 contribute to the 1-deoxy-D-xylulose 5-phosphate site; these read AG and NT.

It belongs to the ThiG family. Homotetramer. Forms heterodimers with either ThiH or ThiS.

The protein resides in the cytoplasm. The enzyme catalyses [ThiS sulfur-carrier protein]-C-terminal-Gly-aminoethanethioate + 2-iminoacetate + 1-deoxy-D-xylulose 5-phosphate = [ThiS sulfur-carrier protein]-C-terminal Gly-Gly + 2-[(2R,5Z)-2-carboxy-4-methylthiazol-5(2H)-ylidene]ethyl phosphate + 2 H2O + H(+). It participates in cofactor biosynthesis; thiamine diphosphate biosynthesis. Catalyzes the rearrangement of 1-deoxy-D-xylulose 5-phosphate (DXP) to produce the thiazole phosphate moiety of thiamine. Sulfur is provided by the thiocarboxylate moiety of the carrier protein ThiS. In vitro, sulfur can be provided by H(2)S. The protein is Thiazole synthase of Porphyromonas gingivalis (strain ATCC BAA-308 / W83).